Consider the following 263-residue polypeptide: Hydroxyacylglutathione hydrolase (263 aa).

Positions 56, 58, 60, 61, 115, 135, and 175 each coordinate Zn(2+).

It belongs to the metallo-beta-lactamase superfamily. Glyoxalase II family. As to quaternary structure, monomer. Zn(2+) is required as a cofactor.

It catalyses the reaction an S-(2-hydroxyacyl)glutathione + H2O = a 2-hydroxy carboxylate + glutathione + H(+). It functions in the pathway secondary metabolite metabolism; methylglyoxal degradation; (R)-lactate from methylglyoxal: step 2/2. In terms of biological role, thiolesterase that catalyzes the hydrolysis of S-D-lactoyl-glutathione to form glutathione and D-lactic acid. This chain is Hydroxyacylglutathione hydrolase, found in Polaromonas sp. (strain JS666 / ATCC BAA-500).